A 451-amino-acid chain; its full sequence is Serine--tRNA ligase, cytoplasmic (451 aa).

Position 236–238 (236–238 (TSE)) interacts with L-serine. ATP-binding positions include 267–269 (RKE) and valine 283. Position 290 (glutamate 290) interacts with L-serine. An ATP-binding site is contributed by 354-357 (ELVS). Threonine 392 contributes to the L-serine binding site.

This sequence belongs to the class-II aminoacyl-tRNA synthetase family. Type-1 seryl-tRNA synthetase subfamily. As to quaternary structure, homodimer. The tRNA molecule binds across the dimer.

It localises to the cytoplasm. It carries out the reaction tRNA(Ser) + L-serine + ATP = L-seryl-tRNA(Ser) + AMP + diphosphate + H(+). The enzyme catalyses tRNA(Sec) + L-serine + ATP = L-seryl-tRNA(Sec) + AMP + diphosphate + H(+). It functions in the pathway aminoacyl-tRNA biosynthesis; selenocysteinyl-tRNA(Sec) biosynthesis; L-seryl-tRNA(Sec) from L-serine and tRNA(Sec): step 1/1. Its function is as follows. Catalyzes the attachment of serine to tRNA(Ser). Is also able to aminoacylate tRNA(Sec) with serine, to form the misacylated tRNA L-seryl-tRNA(Sec), which will be further converted into selenocysteinyl-tRNA(Sec). The protein is Serine--tRNA ligase, cytoplasmic (serS) of Dictyostelium discoideum (Social amoeba).